Reading from the N-terminus, the 329-residue chain is Peroxidase 17 (329 aa).

The N-terminal stretch at 1 to 19 (MSLLPHLILYLTLLTVVVT) is a signal peptide. 4 disulfides stabilise this stretch: C32–C112, C65–C70, C118–C315, and C197–C229. H63 acts as the Proton acceptor in catalysis. Ca(2+) is bound by residues D64, V67, G69, D71, and S73. Residue P160 coordinates substrate. N-linked (GlcNAc...) asparagine glycosylation is found at N165 and N177. Heme b is bound at residue H190. S191 contributes to the Ca(2+) binding site. N-linked (GlcNAc...) asparagine glycans are attached at residues N206 and N236. 3 residues coordinate Ca(2+): D242, T244, and D249.

The protein belongs to the peroxidase family. Classical plant (class III) peroxidase subfamily. Heme b is required as a cofactor. Ca(2+) serves as cofactor.

It localises to the secreted. It is found in the vacuole. It carries out the reaction 2 a phenolic donor + H2O2 = 2 a phenolic radical donor + 2 H2O. Removal of H(2)O(2), oxidation of toxic reductants, biosynthesis and degradation of lignin, suberization, auxin catabolism, response to environmental stresses such as wounding, pathogen attack and oxidative stress. These functions might be dependent on each isozyme/isoform in each plant tissue. This is Peroxidase 17 (PER17) from Arabidopsis thaliana (Mouse-ear cress).